Consider the following 382-residue polypeptide: SOX domain-containing protein dichaete (382 aa).

2 disordered regions span residues 53-142 (GGSP…EGHI) and 346-382 (YPSS…PVLY). Positions 60-69 (AGQGVNGSSG) are enriched in gly residues. Residues 96 to 123 (NSSIGSAGSLGSQSSLGSNGSGLNSSSG) are compositionally biased toward low complexity. Positions 142–210 (IKRPMNAFMV…LHMKEHPDYK (69 aa)) form a DNA-binding region, HMG box. The segment covering 347–360 (PSSSTSSPGSSPGT) has biased composition (low complexity).

As to expression, initially expressed in a pair-rule-like pattern which is rapidly replaced by strong neuroectoderm expression.

It localises to the nucleus. Functionally, essential for segmentation and CNS development. May modulate the actions of other transcription factors, including gap and pair-rule proteins. This is SOX domain-containing protein dichaete (D) from Drosophila melanogaster (Fruit fly).